The sequence spans 223 residues: All-trans retinoic acid-induced differentiation factor (223 aa).

The first 25 residues, 1–25, serve as a signal peptide directing secretion; sequence MASRESGGSRAAALLLVLGVERALA. Residues 26-193 lie on the Extracellular side of the membrane; it reads LPEICTLCPG…YKCMRQGSFS (168 aa). The EGF-like domain occupies 146-187; that stretch reads QRDLCNSTGSPEMCPENGSCASDGPGLLQCVCADGFHGYKCM. Disulfide bonds link Cys150/Cys165, Cys159/Cys175, and Cys177/Cys186. The helical transmembrane segment at 194 to 214 threads the bilayer; the sequence is LLMFFGILGSTTLAISILLWG. Residues 215–223 lie on the Cytoplasmic side of the membrane; sequence TQRRKAKAS.

As to quaternary structure, interacts with NELL1; the interaction promotes osteoblastic differentiation and mineralization. Interacts with SLC37A3; the interaction is direct and both proteins are mutually dependent for their stability.

It is found in the nucleus envelope. The protein resides in the cell membrane. Its subcellular location is the lysosome membrane. Functionally, promotes osteoblast cell differentiation and terminal mineralization. Plays a role in inducing the cell cycle arrest via inhibiting CCND1 expression in all-trans-retinoic acid (ATRA) signal pathway. In osteoclasts, forms a transporter complex with ATRAID for nitrogen-containing-bisphophonates (N-BPs) required for releasing N-BP molecules that have trafficked to lysosomes through fluid-phase endocytosis into the cytosol. The polypeptide is All-trans retinoic acid-induced differentiation factor (Atraid) (Mus musculus (Mouse)).